The chain runs to 741 residues: 1,4-alpha-glucan branching enzyme GlgB (741 aa).

Catalysis depends on D420, which acts as the Nucleophile. Catalysis depends on E473, which acts as the Proton donor.

It belongs to the glycosyl hydrolase 13 family. GlgB subfamily. In terms of assembly, monomer.

The enzyme catalyses Transfers a segment of a (1-&gt;4)-alpha-D-glucan chain to a primary hydroxy group in a similar glucan chain.. It participates in glycan biosynthesis; glycogen biosynthesis. In terms of biological role, catalyzes the formation of the alpha-1,6-glucosidic linkages in glycogen by scission of a 1,4-alpha-linked oligosaccharide from growing alpha-1,4-glucan chains and the subsequent attachment of the oligosaccharide to the alpha-1,6 position. This is 1,4-alpha-glucan branching enzyme GlgB from Pseudomonas syringae pv. tomato (strain ATCC BAA-871 / DC3000).